The primary structure comprises 155 residues: dCTP deaminase (155 aa).

DCTP is bound by residues 79–84 (RSSLAR), D95, Q124, and Y138.

The protein belongs to the dCTP deaminase family. In terms of assembly, homotrimer.

The enzyme catalyses dCTP + H2O + H(+) = dUTP + NH4(+). The protein operates within pyrimidine metabolism; dUMP biosynthesis; dUMP from dCTP (dUTP route): step 1/2. Its function is as follows. Catalyzes the deamination of dCTP to dUTP. The protein is dCTP deaminase of Thermococcus kodakarensis (strain ATCC BAA-918 / JCM 12380 / KOD1) (Pyrococcus kodakaraensis (strain KOD1)).